Consider the following 434-residue polypeptide: Methylenetetrahydrofolate--tRNA-(uracil-5-)-methyltransferase TrmFO (434 aa).

10–15 (GAGLAG) provides a ligand contact to FAD.

Belongs to the MnmG family. TrmFO subfamily. Requires FAD as cofactor.

It localises to the cytoplasm. It catalyses the reaction uridine(54) in tRNA + (6R)-5,10-methylene-5,6,7,8-tetrahydrofolate + NADH + H(+) = 5-methyluridine(54) in tRNA + (6S)-5,6,7,8-tetrahydrofolate + NAD(+). It carries out the reaction uridine(54) in tRNA + (6R)-5,10-methylene-5,6,7,8-tetrahydrofolate + NADPH + H(+) = 5-methyluridine(54) in tRNA + (6S)-5,6,7,8-tetrahydrofolate + NADP(+). In terms of biological role, catalyzes the folate-dependent formation of 5-methyl-uridine at position 54 (M-5-U54) in all tRNAs. The polypeptide is Methylenetetrahydrofolate--tRNA-(uracil-5-)-methyltransferase TrmFO (Bacillus cereus (strain ATCC 14579 / DSM 31 / CCUG 7414 / JCM 2152 / NBRC 15305 / NCIMB 9373 / NCTC 2599 / NRRL B-3711)).